The chain runs to 215 residues: Cytochrome b6 (215 aa).

Residues 32–52 form a helical membrane-spanning segment; it reads IFYCLGGITLTCFLVQVATGF. Cysteine 35 serves as a coordination point for heme c. Heme b contacts are provided by histidine 86 and histidine 100. Helical transmembrane passes span 90-110, 116-136, and 186-206; these read ASMM…TGGF, LTWI…VTGY, and LHTF…FLMI. Histidine 187 and histidine 202 together coordinate heme b.

Belongs to the cytochrome b family. PetB subfamily. As to quaternary structure, the 4 large subunits of the cytochrome b6-f complex are cytochrome b6, subunit IV (17 kDa polypeptide, PetD), cytochrome f and the Rieske protein, while the 4 small subunits are PetG, PetL, PetM and PetN. The complex functions as a dimer. It depends on heme b as a cofactor. The cofactor is heme c.

Its subcellular location is the plastid. The protein resides in the chloroplast thylakoid membrane. In terms of biological role, component of the cytochrome b6-f complex, which mediates electron transfer between photosystem II (PSII) and photosystem I (PSI), cyclic electron flow around PSI, and state transitions. This chain is Cytochrome b6, found in Psilotum nudum (Whisk fern).